Consider the following 180-residue polypeptide: Chromosome-anchoring protein RacA (180 aa).

The H-T-H motif DNA-binding region spans 5 to 25; that stretch reads TPFIAKKLGVSPKAVVRIAQQ. The stretch at 89-151 forms a coiled coil; the sequence is SHDFEQLTAQ…LEATLKKEEP (63 aa).

It belongs to the RacA family.

It localises to the cytoplasm. Required for the formation of axial filaments and for anchoring the origin regions at the cell poles in sporulating cells, thus ensuring proper chromosome segregation in the prespore. Binds in a dispersed manner throughout the chromosome but preferentially to sites clustered in the origin portion of the chromosome, causing condensation of the chromosome and its remodeling into an elongated, anchored structure. The sequence is that of Chromosome-anchoring protein RacA from Bacillus cereus (strain ATCC 10987 / NRS 248).